Here is a 496-residue protein sequence, read N- to C-terminus: Trimethylamine methyltransferase MttB (496 aa).

Position 331 (Pyl-331) is a non-standard amino acid, pyrrolysine.

Belongs to the trimethylamine methyltransferase family.

The catalysed reaction is Co(I)-[trimethylamine-specific corrinoid protein] + trimethylamine + H(+) = methyl-Co(III)-[trimethylamine-specific corrinoid protein] + dimethylamine. Its function is as follows. Catalyzes the transfer of a methyl group from trimethylamine to the corrinoid cofactor of MttC. The sequence is that of Trimethylamine methyltransferase MttB from Desulfitobacterium hafniense (strain DSM 10664 / DCB-2).